The following is a 193-amino-acid chain: Cysteine and glycine-rich protein 2 (193 aa).

One can recognise an LIM zinc-binding 1 domain in the interval 10–61 (CGACGRTVYHAEEVQCDGRTFHRCCFLCMVCRKNLDSTTVAIHDEEIYCKSC). A Nuclear localization signal motif is present at residues 64–69 (KKYGPK). Lys91 participates in a covalent cross-link: Glycyl lysine isopeptide (Lys-Gly) (interchain with G-Cter in SUMO2). N6-acetyllysine is present on residues Lys112 and Lys131. An LIM zinc-binding 2 domain is found at 119 to 170 (CSRCGDSVYAAEKIIGAGKPWHKNCFRCAKCGKSLESTTLTEKEGEIYCKGC). Lys137 bears the N6-acetyllysine; alternate mark. N6-succinyllysine; alternate is present on Lys137. Lys161 carries the post-translational modification N6-acetyllysine.

Interacts with KAT14. The LIM domain 1 is necessary and sufficient for this interaction. Interacts with GLRX3. As to expression, highly expressed in the aorta; weakly found in the kidney, thymus, and intestine. Barely detectable in brain, testis, esophagus, lung, liver, aortic adventitia, vena cava, or uterus; not present in heart and skeletal muscle.

It localises to the nucleus. Its function is as follows. Drastically down-regulated in response to PDGF-BB or cell injury, that promote smooth muscle cell proliferation and dedifferentiation. Seems to play a role in the development of the embryonic vascular system. The protein is Cysteine and glycine-rich protein 2 (Csrp2) of Rattus norvegicus (Rat).